The chain runs to 959 residues: Translation initiation factor IF-2 (959 aa).

Residues 1-10 are compositionally biased toward basic and acidic residues; it reads MSDKTNDDKT. Residues 1-374 are disordered; sequence MSDKTNDDKT…SQMQETREKI (374 aa). Residues 27–37 are compositionally biased toward polar residues; sequence EQSTVRQNFSH. Low complexity-rich tracts occupy residues 63 to 118 and 128 to 138; these read AAAA…VTKP and QRPGGQQAQRP. Basic and acidic residues-rich tracts occupy residues 154–225 and 232–241; these read SEMD…EAAK and ARSERRDDAR. The segment covering 246-284 has biased composition (low complexity); that stretch reads GARPQQAGRPQGGRPQPAGRPQQGSPRPAPIIADAAPIA. The span at 318-333 shows a compositional bias: basic and acidic residues; the sequence is PEVRAPKVVKGEDDRR. One can recognise a tr-type G domain in the interval 457-626; sequence SRPPVVTIMG…LLQAEMLDLK (170 aa). The interval 466–473 is G1; that stretch reads GHVDHGKT. 466 to 473 contributes to the GTP binding site; sequence GHVDHGKT. A G2 region spans residues 491–495; sequence GITQH. Positions 512–515 are G3; that stretch reads DTPG. GTP is bound by residues 512–516 and 566–569; these read DTPGH and NKID. The segment at 566-569 is G4; the sequence is NKID. The interval 602 to 604 is G5; sequence SAK.

This sequence belongs to the TRAFAC class translation factor GTPase superfamily. Classic translation factor GTPase family. IF-2 subfamily.

The protein resides in the cytoplasm. One of the essential components for the initiation of protein synthesis. Protects formylmethionyl-tRNA from spontaneous hydrolysis and promotes its binding to the 30S ribosomal subunits. Also involved in the hydrolysis of GTP during the formation of the 70S ribosomal complex. This Brucella ovis (strain ATCC 25840 / 63/290 / NCTC 10512) protein is Translation initiation factor IF-2.